We begin with the raw amino-acid sequence, 730 residues long: Denticleless protein homolog (730 aa).

The residue at position 1 (M1) is an N-acetylmethionine. WD repeat units lie at residues 47-89 (GVPV…FRKK), 96-135 (AHWN…LIGT), and 138-178 (GHQC…KDGF). Residues 168-171 (WDTR) carry the DDB1-binding motif motif. Over residues 188 to 198 (AHNTSDKQTPS) the composition is skewed to polar residues. Residues 188 to 210 (AHNTSDKQTPSKPKKKQNSKGLA) form a disordered region. T196 bears the Phosphothreonine mark. Positions 197–203 (PSKPKKK) match the Nuclear localization signal motif. WD repeat units lie at residues 214–253 (DFQQ…TAYR), 267–308 (SSTR…TSPV), 313–354 (GHQN…QPPT), and 358–398 (GHSQ…EEKP). A DDB1-binding motif motif is present at residues 243–246 (WDLR). The disordered stretch occupies residues 399 to 443 (GGDKLSTVGWASQKKKESRPGLVTVTSSQSTPAKAPRAKCNPSNS). Residues S410 and S426 each carry the phosphoserine modification. T464 carries the phosphothreonine; by CDK1 and CDK2 modification. Residues 465 to 498 (PTFSIKTSPAKARSPINRRGSVSSVSPKPPSSFK) form a disordered region. A phosphoserine mark is found at S485, S490, S495, and S512. T516 is subject to Phosphothreonine. S557 carries the post-translational modification Phosphoserine. Disordered stretches follow at residues 599–631 (SKDS…YASE) and 644–703 (GEGS…TITP). 2 positions are modified to phosphoserine: S676 and S679. Polar residues predominate over residues 679 to 689 (SPSSQTPNSRR). 2 positions are modified to phosphothreonine: T684 and T702. S717 carries the post-translational modification Phosphoserine.

It belongs to the WD repeat cdt2 family. In terms of assembly, component of the DCX(DTL) E3 ubiquitin ligase complex (also called CRL4(CDT2)), at least composed of CUL4 (CUL4A or CUL4B), DDB1, DTL/CDT2 and RBX1. Interacts with CDKN1A. Interacts with DDB1. Interacts with FBXO11; SCF(FBXWO11) controls DTL stability but DCX(DTL) does not control FBXO11 stability. Interacts with CRY1. In terms of processing, ubiquitinated by the anaphase promoting complex/cyclosome (APC/C). Autoubiquitinated through 'Lys-48'-polyubiquitin chains in a PCNA-independent reaction, allowing proteasomal turnover. Polyubiquitinated by SCF(FBXO11) when not phosphorylated, leading to its degradation. A tight regulation of the polyubiquitination by SCF(FBXO11) is involved in the control of different processes such as TGF-beta signaling, cell cycle progression and exit. Phosphorylated at Thr-464 by CDK1/Cyclin-B and CDK2/Cyclin-A but not by CDK2/Cyclin-E, MAPK1 or PLK1. Phosphorylation at Thr-464 inhibits the interaction with FBXO11 and decreases upon cell cycle exit induced by TGF-beta or serum starvation. As to expression, expressed in placenta and testis, very low expression seen in skeletal muscle. Detected in all hematopoietic tissues examined, with highest expression in thymus and bone marrow. A low level detected in the spleen and lymph node, and barely detectable level in the peripheral leukocytes. RA treatment down-regulated the expression in NT2 cell.

Its subcellular location is the nucleus. The protein localises to the nucleus membrane. It is found in the cytoplasm. It localises to the cytoskeleton. The protein resides in the microtubule organizing center. Its subcellular location is the centrosome. The protein localises to the chromosome. It functions in the pathway protein modification; protein ubiquitination. Functionally, substrate-specific adapter of a DCX (DDB1-CUL4-X-box) E3 ubiquitin-protein ligase complex required for cell cycle control, DNA damage response and translesion DNA synthesis. The DCX(DTL) complex, also named CRL4(CDT2) complex, mediates the polyubiquitination and subsequent degradation of CDT1, CDKN1A/p21(CIP1), FBH1, KMT5A and SDE2. CDT1 degradation in response to DNA damage is necessary to ensure proper cell cycle regulation of DNA replication. CDKN1A/p21(CIP1) degradation during S phase or following UV irradiation is essential to control replication licensing. KMT5A degradation is also important for a proper regulation of mechanisms such as TGF-beta signaling, cell cycle progression, DNA repair and cell migration. Most substrates require their interaction with PCNA for their polyubiquitination: substrates interact with PCNA via their PIP-box, and those containing the 'K+4' motif in the PIP box, recruit the DCX(DTL) complex, leading to their degradation. In undamaged proliferating cells, the DCX(DTL) complex also promotes the 'Lys-164' monoubiquitination of PCNA, thereby being involved in PCNA-dependent translesion DNA synthesis. The DDB1-CUL4A-DTL E3 ligase complex regulates the circadian clock function by mediating the ubiquitination and degradation of CRY1. The polypeptide is Denticleless protein homolog (DTL) (Homo sapiens (Human)).